The sequence spans 131 residues: Profilin (131 aa).

This sequence belongs to the profilin family. In terms of assembly, occurs in many kinds of cells as a complex with monomeric actin in a 1:1 ratio.

The protein localises to the cytoplasm. It is found in the cytoskeleton. Binds to actin and affects the structure of the cytoskeleton. At high concentrations, profilin prevents the polymerization of actin, whereas it enhances it at low concentrations. By binding to PIP2, it inhibits the formation of IP3 and DG. This is Profilin from Cucumis melo (Muskmelon).